The chain runs to 97 residues: Putative membrane protein insertion efficiency factor (97 aa).

It belongs to the UPF0161 family.

It is found in the cell inner membrane. Its function is as follows. Could be involved in insertion of integral membrane proteins into the membrane. The polypeptide is Putative membrane protein insertion efficiency factor (Chlamydia muridarum (strain MoPn / Nigg)).